Consider the following 350-residue polypeptide: D-guloside 3-dehydrogenase (350 aa).

The protein belongs to the zinc-containing alcohol dehydrogenase family. It depends on Zn(2+) as a cofactor.

The enzyme catalyses a D-guloside + NAD(+) = a 3-dehydro-D-guloside + NADH + H(+). Its function is as follows. Catalyzes the NAD(+)-dependent oxidation of the hydroxyl group at C3 of D-gulosides leading to 3-dehydro-D-gulosides. Probably functions in a metabolic pathway that transforms D-gulosides to D-glucosides. Is also able to catalyze the reverse reactions, i.e. the NADH-dependent reduction of the oxo group at C3 of 3-dehydro-D-gulosides leading to D-gulosides. In vitro, can oxidize D-gulose and methyl beta-D-guloside, and reduce methyl alpha-3-dehydro-D-guloside and methyl beta-3-dehydro-D-guloside. However, the actual specific physiological substrates for this metabolic pathway are unknown. The chain is D-guloside 3-dehydrogenase (ycjQ) from Escherichia coli (strain K12).